The following is a 1400-amino-acid chain: DNA-directed RNA polymerase subunit beta' (1400 aa).

Cysteine 70, cysteine 72, cysteine 85, and cysteine 88 together coordinate Zn(2+). Positions 460, 462, and 464 each coordinate Mg(2+). Zn(2+) contacts are provided by cysteine 814, cysteine 888, cysteine 895, and cysteine 898. The tract at residues 1368 to 1400 is disordered; it reads RQAKRAEAQEGPSAEQATDNLAALLNAGFSSDE.

The protein belongs to the RNA polymerase beta' chain family. In terms of assembly, the RNAP catalytic core consists of 2 alpha, 1 beta, 1 beta' and 1 omega subunit. When a sigma factor is associated with the core the holoenzyme is formed, which can initiate transcription. Mg(2+) serves as cofactor. Requires Zn(2+) as cofactor.

It carries out the reaction RNA(n) + a ribonucleoside 5'-triphosphate = RNA(n+1) + diphosphate. Its function is as follows. DNA-dependent RNA polymerase catalyzes the transcription of DNA into RNA using the four ribonucleoside triphosphates as substrates. The sequence is that of DNA-directed RNA polymerase subunit beta' from Vibrio parahaemolyticus serotype O3:K6 (strain RIMD 2210633).